We begin with the raw amino-acid sequence, 104 residues long: uncharacterized protein (104 aa).

Residues 80–98 (GSSLPLFDLVFILLSTFFL) form a helical membrane-spanning segment.

Its subcellular location is the membrane. This is an uncharacterized protein from Saccharomyces cerevisiae (strain ATCC 204508 / S288c) (Baker's yeast).